The following is a 125-amino-acid chain: MVSAVTTMGCMKAAGVSLLLLYFLLNAADSHPNFDSSSMACGECSLGLNRLFSRDRPLYQCMGCCFSRAYPTPQTAIQTMAIPKNITSEAKCCVAKHSYETKVDDITVRNHTECHCSTCYYHKLI.

The N-terminal stretch at 1–30 (MVSAVTTMGCMKAAGVSLLLLYFLLNAADS) is a signal peptide. Cystine bridges form between Cys-41–Cys-64, Cys-44–Cys-93, Cys-61–Cys-114, Cys-65–Cys-116, and Cys-92–Cys-119. Asn-85 and Asn-110 each carry an N-linked (GlcNAc...) asparagine glycan.

This sequence belongs to the glycoprotein hormones subunit alpha family. In terms of assembly, heterodimer. Glycoprotein hormones are heterodimers composed of a common alpha chain described here and a unique beta chain which confers their biological specificity to the different hormones.

The protein resides in the secreted. In terms of biological role, shared alpha chain of heterodimeric glycoprotein hormones. These hormones bind specific receptors on target cells that in turn activate downstream signaling pathways. Involved in gametogenesis and steroidogenesis. The sequence is that of Glycoprotein hormones alpha chain (cga) from Fundulus heteroclitus (Killifish).